The sequence spans 634 residues: Growth hormone receptor (634 aa).

An N-terminal signal peptide occupies residues 1-18 (MDLWQLLLTLAVAGSSDA). The Extracellular portion of the chain corresponds to 19–260 (FSGSEATPAF…NPSACEEDFQ (242 aa)). Asn46 carries N-linked (GlcNAc...) asparagine glycosylation. Cys56 and Cys66 form a disulfide bridge. An N-linked (GlcNAc...) asparagine glycan is attached at Asn73. Cysteines 97 and 108 form a disulfide. Asn111 carries N-linked (GlcNAc...) asparagine glycosylation. Cys122 and Cys136 are joined by a disulfide. Positions 147-250 (PPVGLNWTLL…EVLLITFPQM (104 aa)) constitute a Fibronectin type-III domain. N-linked (GlcNAc...) asparagine glycosylation is found at Asn152, Asn157, and Asn196. The WSXWS motif signature appears at 236 to 240 (YGKFS). The chain crosses the membrane as a helical span at residues 261-284 (FPWFLIIIFGILGLAVTLYLLIFS). The Cytoplasmic segment spans residues 285–634 (KQQRIKMLIL…STDQLNKIMP (350 aa)). A required for JAK2 binding region spans residues 290 to 375 (KMLILPPVPV…HEKSLNIFGA (86 aa)). The short motif at 293–301 (ILPPVPVPK) is the Box 1 motif element. The short motif at 336-345 (DSWVEFIELD) is the UbE motif element. Position 337 is a phosphoserine (Ser337).

Belongs to the type I cytokine receptor family. Type 1 subfamily. In terms of assembly, on growth hormone (GH) binding, forms homodimers and binds JAK2 via a box 1-containing domain. In terms of processing, the soluble form (GHBP) is produced by phorbol ester-promoted proteolytic cleavage at the cell surface (shedding) by ADAM17/TACE. Shedding is inhibited by growth hormone (GH) binding to the receptor probably due to a conformational change in GHR rendering the receptor inaccessible to ADAM17. On GH binding, phosphorylated on tyrosine residues in the cytoplasmic domain by JAK2. Post-translationally, ubiquitinated by the ECS(SOCS2) complex following ligand-binding and phosphorylation by JAK2, leading to its degradation by the proteasome. Regulation by the ECS(SOCS2) complex acts as a negative feedback loop of growth hormone receptor signaling. Ubiquitination is not sufficient for GHR internalization.

The protein localises to the cell membrane. It localises to the secreted. Functionally, receptor for pituitary gland growth hormone (GH1) involved in regulating postnatal body growth. On ligand binding, couples to the JAK2/STAT5 pathway. Its function is as follows. The soluble form (GHBP) acts as a reservoir of growth hormone in plasma and may be a modulator/inhibitor of GH signaling. The protein is Growth hormone receptor (GHR) of Bos taurus (Bovine).